A 313-amino-acid polypeptide reads, in one-letter code: 18S rRNA aminocarboxypropyltransferase (313 aa).

Residues 1 to 30 are disordered; the sequence is MGKGKNKMHEPKNGRPQRGANGHSSRQNHR. Residues S62, V110, L133, and W148 each coordinate S-adenosyl-L-methionine. Positions 215-228 are enriched in basic and acidic residues; the sequence is KETQERKSRAKEED. Positions 215-313 are disordered; that stretch reads KETQERKSRA…SYDPLGNLIR (99 aa). The segment covering 237 to 246 has biased composition (polar residues); sequence RRGNGSQSDT. The segment covering 247-257 has biased composition (acidic residues); it reads SESEENSEQSD. Phosphoserine occurs at positions 286 and 289.

It belongs to the TDD superfamily. TSR3 family.

It is found in the cytoplasm. It localises to the nucleus. It catalyses the reaction an N(1)-methylpseudouridine in rRNA + S-adenosyl-L-methionine = N(1)-methyl-N(3)-[(3S)-3-amino-3-carboxypropyl]pseudouridine in rRNA + S-methyl-5'-thioadenosine + H(+). It carries out the reaction N(1)-methylpseudouridine(1191) in yeast 18S rRNA + S-adenosyl-L-methionine = N(1)-methyl-N(3)-[(3S)-3-amino-3-carboxypropyl]pseudouridine(1191) in yeast 18S rRNA + S-methyl-5'-thioadenosine + H(+). Its function is as follows. Aminocarboxypropyltransferase that catalyzes the aminocarboxypropyl transfer on pseudouridine at position 1191 (Psi1191) in 18S rRNA. It constitutes the last step in biosynthesis of the hypermodified N1-methyl-N3-(3-amino-3-carboxypropyl) pseudouridine (m1acp3-Psi) conserved in eukaryotic 18S rRNA. Required for processing 35S pre-rRNA at site D. The protein is 18S rRNA aminocarboxypropyltransferase of Saccharomyces cerevisiae (strain ATCC 204508 / S288c) (Baker's yeast).